We begin with the raw amino-acid sequence, 409 residues long: Phosphatidylserine decarboxylase proenzyme, mitochondrial (409 aa).

Residues 1 to 52 (MATSVGHRCLGLLHGVAPWRSSLHPCEITALSQSLQPLRKLPFRAFRTDARK) constitute a mitochondrion transit peptide. The Mitochondrial matrix portion of the chain corresponds to 53–63 (IHTAPARTMFL). A helical transmembrane segment spans residues 64–82 (LRPVPILLATGGGYAGYRQ). Residues 83-409 (YEKYRERELE…IRFGEALGSL (327 aa)) lie on the Mitochondrial intermembrane side of the membrane. Active-site charge relay system; for autoendoproteolytic cleavage activity residues include Asp191, His267, and Ser378. Ser378 functions as the Schiff-base intermediate with substrate; via pyruvic acid; for decarboxylase activity in the catalytic mechanism. At Ser378 the chain carries Pyruvic acid (Ser); by autocatalysis.

It belongs to the phosphatidylserine decarboxylase family. PSD-B subfamily. Eukaryotic type I sub-subfamily. In terms of assembly, heterodimer of a large membrane-associated beta subunit and a small pyruvoyl-containing alpha subunit. The cofactor is pyruvate. In terms of processing, is synthesized initially as an inactive proenzyme. Formation of the active enzyme involves a self-maturation process in which the active site pyruvoyl group is generated from an internal serine residue via an autocatalytic post-translational modification. Two non-identical subunits are generated from the proenzyme in this reaction, and the pyruvate is formed at the N-terminus of the alpha chain, which is derived from the carboxyl end of the proenzyme. The autoendoproteolytic cleavage occurs by a canonical serine protease mechanism, in which the side chain hydroxyl group of the serine supplies its oxygen atom to form the C-terminus of the beta chain, while the remainder of the serine residue undergoes an oxidative deamination to produce ammonia and the pyruvoyl prosthetic group on the alpha chain. During this reaction, the Ser that is part of the protease active site of the proenzyme becomes the pyruvoyl prosthetic group, which constitutes an essential element of the active site of the mature decarboxylase.

The protein localises to the mitochondrion inner membrane. Its subcellular location is the lipid droplet. The protein resides in the cytoplasm. The enzyme catalyses a 1,2-diacyl-sn-glycero-3-phospho-L-serine + H(+) = a 1,2-diacyl-sn-glycero-3-phosphoethanolamine + CO2. It participates in phospholipid metabolism; phosphatidylethanolamine biosynthesis. Catalyzes the formation of phosphatidylethanolamine (PtdEtn) from phosphatidylserine (PtdSer). Plays a central role in phospholipid metabolism and in the interorganelle trafficking of phosphatidylserine. May be involved in lipid droplet biogenesis at the endoplasmic reticulum membrane. In Pongo abelii (Sumatran orangutan), this protein is Phosphatidylserine decarboxylase proenzyme, mitochondrial.